Consider the following 574-residue polypeptide: Proline--tRNA ligase (574 aa).

Belongs to the class-II aminoacyl-tRNA synthetase family. ProS type 1 subfamily. As to quaternary structure, homodimer.

It localises to the cytoplasm. It carries out the reaction tRNA(Pro) + L-proline + ATP = L-prolyl-tRNA(Pro) + AMP + diphosphate. Catalyzes the attachment of proline to tRNA(Pro) in a two-step reaction: proline is first activated by ATP to form Pro-AMP and then transferred to the acceptor end of tRNA(Pro). As ProRS can inadvertently accommodate and process non-cognate amino acids such as alanine and cysteine, to avoid such errors it has two additional distinct editing activities against alanine. One activity is designated as 'pretransfer' editing and involves the tRNA(Pro)-independent hydrolysis of activated Ala-AMP. The other activity is designated 'posttransfer' editing and involves deacylation of mischarged Ala-tRNA(Pro). The misacylated Cys-tRNA(Pro) is not edited by ProRS. The polypeptide is Proline--tRNA ligase (Buchnera aphidicola subsp. Baizongia pistaciae (strain Bp)).